We begin with the raw amino-acid sequence, 568 residues long: MTTQSEYDYIIIGAGSAGNTLAARLTEDAGVTVLLLEAGGPDYRLDFRTQMPAALAFPLQGRRYNWAYETEPEPHMDNRRMECGRGKGLGGSSLINGMCYIRGNAMDYDGWAKEPGLEDWSYLDCLPYFRKAETRDIGPNDYHGGEGPVSVTTPKAGNNPLFHAMVEAGVQAGFPRTDDLNGYQQEGFGPMDRTVTPKGRRASTARGYLDEAKKRDTLSIVTHALTDRILFEGKRAVGVAYLVGDSDTRIEVRARKEVLLCGGAIASPQILQRSGVGPAEVLNKLDIPVVHDLPGVGQNLQDHLEMYLQYACTQPVSLYPSLKWWNQPAIGAEWMFLGTGIGASNQFEAGGFIRSSEAFEWPNIQYHFLPVAINYNGTKGVQEHGFQAHVGSMRSPSRGRVHVKSKDPREYPSILFNYMASDQDWQEFRDGIRLTREIMQQPALDPYRGREISPGIDVQSDEALDQFVREHAETAYHPSCSCKMGTDEMAVVDGQGRVHGMQNLRVVDASIMPIITTGNLNAPTIMIAEKIADKIRGRQPLPRSTADYFVAGDKPARGKPLREISHQA.

8 to 37 lines the FAD pocket; sequence DYIIIGAGSAGNTLAARLTEDAGVTVLLLE. Catalysis depends on His-477, which acts as the Proton acceptor.

It belongs to the GMC oxidoreductase family. Requires FAD as cofactor.

It carries out the reaction choline + A = betaine aldehyde + AH2. It catalyses the reaction betaine aldehyde + NAD(+) + H2O = glycine betaine + NADH + 2 H(+). Its pathway is amine and polyamine biosynthesis; betaine biosynthesis via choline pathway; betaine aldehyde from choline (cytochrome c reductase route): step 1/1. Its function is as follows. Involved in the biosynthesis of the osmoprotectant glycine betaine. Catalyzes the oxidation of choline to betaine aldehyde and betaine aldehyde to glycine betaine at the same rate. The chain is Oxygen-dependent choline dehydrogenase from Pseudomonas syringae pv. tomato (strain ATCC BAA-871 / DC3000).